The sequence spans 336 residues: Isethionate-binding periplasmic protein DctP (336 aa).

The signal sequence occupies residues 1 to 23 (MKHLLKAGALVALACIVTLTAGA).

The protein belongs to the bacterial solute-binding protein 7 family. The complex comprises the periplasmic solute receptor protein DctP, and the fused transmembrane protein DctMQ.

The protein resides in the periplasm. The enzyme catalyses 2-hydroxyethane-1-sulfonate(out) + Na(+)(out) = 2-hydroxyethane-1-sulfonate(in) + Na(+)(in). The protein operates within organosulfur degradation; alkanesulfonate degradation. In terms of biological role, part of the tripartite ATP-independent periplasmic (TRAP) transport system DctPQM involved in the uptake of isethionate (2-hydroxyethanesulfonate), which is then catabolized by enzymes encoded by adjacent genes in the locus. The DctP subunit is the solute-binding protein. Thereby is involved in an anaerobic respiration pathway that converts the sulfonate isethionate to ammonia, acetate and sulfide. This Oleidesulfovibrio alaskensis (strain ATCC BAA-1058 / DSM 17464 / G20) (Desulfovibrio alaskensis) protein is Isethionate-binding periplasmic protein DctP.